Consider the following 82-residue polypeptide: Small, acid-soluble spore protein gamma-type (82 aa).

2 stretches are compositionally biased toward polar residues: residues 1-24 (MANS…ASGQ) and 32-50 (ASET…SAAG). The tract at residues 1–82 (MANSNNKTNA…SAEQNKQQNS (82 aa)) is disordered. 2 consecutive repeats follow at residues 19–45 (QSAS…KQNQ) and 46–72 (QSAA…QQNQ). The span at 69 to 82 (QQNQSAEQNKQQNS) shows a compositional bias: low complexity.

It belongs to the gamma-type SASP family.

In terms of biological role, SASP are bound to spore DNA. They are double-stranded DNA-binding proteins that cause DNA to change to an a-like conformation. They protect the DNA backbone from chemical and enzymatic cleavage and are thus involved in dormant spore's high resistance to UV light. The protein is Small, acid-soluble spore protein gamma-type of Bacillus subtilis.